Here is a 188-residue protein sequence, read N- to C-terminus: Elongation factor P (188 aa).

K34 is modified (N6-(3,6-diaminohexanoyl)-5-hydroxylysine).

Belongs to the elongation factor P family. Post-translationally, may be beta-lysylated on the epsilon-amino group of Lys-34 by the combined action of EpmA and EpmB, and then hydroxylated on the C5 position of the same residue by EpmC (if this protein is present). Lysylation is critical for the stimulatory effect of EF-P on peptide-bond formation. The lysylation moiety may extend toward the peptidyltransferase center and stabilize the terminal 3-CCA end of the tRNA. Hydroxylation of the C5 position on Lys-34 may allow additional potential stabilizing hydrogen-bond interactions with the P-tRNA.

It is found in the cytoplasm. It participates in protein biosynthesis; polypeptide chain elongation. In terms of biological role, involved in peptide bond synthesis. Alleviates ribosome stalling that occurs when 3 or more consecutive Pro residues or the sequence PPG is present in a protein, possibly by augmenting the peptidyl transferase activity of the ribosome. Modification of Lys-34 is required for alleviation. The sequence is that of Elongation factor P from Proteus mirabilis (strain HI4320).